The sequence spans 201 residues: MKEFKAVFPKALIIFIIFTILCGGIYTIFITGISQLIFPKQANGSIIEVNGKKYGSVLLAQQYNDEKHLWGRIMNIDTNTFVDENGKKLAYSAPSNLSPASKEYEALVQERVDKIKENHPEQDEQAIPVDLVTCSGSGLDPHISVAAAKYQINRIAKNNNMEVKDVENIIDKYTSGKLFGVLGEKTVNVLEVNLAIDGILK.

A helical membrane pass occupies residues 13–33 (IIFIIFTILCGGIYTIFITGI).

Belongs to the KdpC family. As to quaternary structure, the system is composed of three essential subunits: KdpA, KdpB and KdpC.

The protein localises to the cell membrane. Part of the high-affinity ATP-driven potassium transport (or Kdp) system, which catalyzes the hydrolysis of ATP coupled with the electrogenic transport of potassium into the cytoplasm. This subunit acts as a catalytic chaperone that increases the ATP-binding affinity of the ATP-hydrolyzing subunit KdpB by the formation of a transient KdpB/KdpC/ATP ternary complex. In Clostridium botulinum (strain Alaska E43 / Type E3), this protein is Potassium-transporting ATPase KdpC subunit.